Reading from the N-terminus, the 26-residue chain is Peroxidase 1 (26 aa).

Aspartate 15 serves as a coordination point for Ca(2+).

This sequence belongs to the peroxidase family. Classical plant (class III) peroxidase subfamily. It depends on heme b as a cofactor. The cofactor is Ca(2+).

It is found in the secreted. The enzyme catalyses 2 a phenolic donor + H2O2 = 2 a phenolic radical donor + 2 H2O. In terms of biological role, removal of H(2)O(2), oxidation of toxic reductants, biosynthesis and degradation of lignin, suberization, auxin catabolism, response to environmental stresses such as wounding, pathogen attack and oxidative stress. These functions might be dependent on each isozyme/isoform in each plant tissue. In Vitis vinifera (Grape), this protein is Peroxidase 1.